A 165-amino-acid polypeptide reads, in one-letter code: Putative ankyrin repeat domain-containing protein 20A5 (165 aa).

ANK repeat units lie at residues 66-95 (QHRTALHLACASGHVKVVTLLVNRKCQIDI), 99-128 (ENRTPLIQAVHCQEEACAVILLEHGANPNL), and 132-161 (YGNTALHYAVYSESTSLAEKLLFHGENIEA).

In Homo sapiens (Human), this protein is Putative ankyrin repeat domain-containing protein 20A5 (ANKRD20A5P).